Here is a 384-residue protein sequence, read N- to C-terminus: Chaperone protein DnaJ (384 aa).

The J domain occupies 6–71 (DYYEVLGISK…TKRKTYDQFG (66 aa)). Residues 141 to 223 (GKKMSIKVNR…CHGTGNTRKV (83 aa)) form a CR-type zinc finger. The Zn(2+) site is built by cysteine 154, cysteine 157, cysteine 171, cysteine 174, cysteine 197, cysteine 200, cysteine 211, and cysteine 214. 4 CXXCXGXG motif repeats span residues 154–161 (CEECNGTG), 171–178 (CSTCNGTG), 197–204 (CSACNGTG), and 211–218 (CSKCHGTG).

Belongs to the DnaJ family. In terms of assembly, homodimer. It depends on Zn(2+) as a cofactor.

Its subcellular location is the cytoplasm. Functionally, participates actively in the response to hyperosmotic and heat shock by preventing the aggregation of stress-denatured proteins and by disaggregating proteins, also in an autonomous, DnaK-independent fashion. Unfolded proteins bind initially to DnaJ; upon interaction with the DnaJ-bound protein, DnaK hydrolyzes its bound ATP, resulting in the formation of a stable complex. GrpE releases ADP from DnaK; ATP binding to DnaK triggers the release of the substrate protein, thus completing the reaction cycle. Several rounds of ATP-dependent interactions between DnaJ, DnaK and GrpE are required for fully efficient folding. Also involved, together with DnaK and GrpE, in the DNA replication of plasmids through activation of initiation proteins. The protein is Chaperone protein DnaJ of Clostridioides difficile (strain 630) (Peptoclostridium difficile).